Reading from the N-terminus, the 63-residue chain is Sperm protamine P1 (63 aa).

The disordered stretch occupies residues 1-47 (MARCRRHIRSRSRSRNQCQRRRRRSHYNRRRTYRRSRRHSRRRRVRR).

Belongs to the protamine P1 family. Testis.

The protein localises to the nucleus. It is found in the chromosome. Protamines substitute for histones in the chromatin of sperm during the haploid phase of spermatogenesis. They compact sperm DNA into a highly condensed, stable and inactive complex. The sequence is that of Sperm protamine P1 (PRM1) from Planigale tenuirostris (Narrow-nosed planigale).